We begin with the raw amino-acid sequence, 241 residues long: Protein-L-isoaspartate O-methyltransferase (241 aa).

Serine 69 is an active-site residue.

Belongs to the methyltransferase superfamily. L-isoaspartyl/D-aspartyl protein methyltransferase family.

It is found in the cytoplasm. The catalysed reaction is [protein]-L-isoaspartate + S-adenosyl-L-methionine = [protein]-L-isoaspartate alpha-methyl ester + S-adenosyl-L-homocysteine. Its function is as follows. Catalyzes the methyl esterification of L-isoaspartyl residues in peptides and proteins that result from spontaneous decomposition of normal L-aspartyl and L-asparaginyl residues. It plays a role in the repair and/or degradation of damaged proteins. The polypeptide is Protein-L-isoaspartate O-methyltransferase (Hyperthermus butylicus (strain DSM 5456 / JCM 9403 / PLM1-5)).